Here is a 304-residue protein sequence, read N- to C-terminus: Protoheme IX farnesyltransferase 1 (304 aa).

8 consecutive transmembrane segments (helical) span residues 24–44 (VVVL…KAPL), 47–67 (FVPW…AGAA), 99–119 (MALG…LAFT), 122–142 (LTAW…TGFL), 150–170 (IVIG…AITG), 176–196 (PLLL…ALCI), 228–248 (LVLF…LVYL), and 280–300 (YSIV…YLPL).

This sequence belongs to the UbiA prenyltransferase family. Protoheme IX farnesyltransferase subfamily.

Its subcellular location is the cell inner membrane. The catalysed reaction is heme b + (2E,6E)-farnesyl diphosphate + H2O = Fe(II)-heme o + diphosphate. Its pathway is porphyrin-containing compound metabolism; heme O biosynthesis; heme O from protoheme: step 1/1. Converts heme B (protoheme IX) to heme O by substitution of the vinyl group on carbon 2 of heme B porphyrin ring with a hydroxyethyl farnesyl side group. This Pseudomonas paraeruginosa (strain DSM 24068 / PA7) (Pseudomonas aeruginosa (strain PA7)) protein is Protoheme IX farnesyltransferase 1.